The chain runs to 334 residues: Phosphate acyltransferase (334 aa).

Belongs to the PlsX family. Homodimer. Probably interacts with PlsY.

It is found in the cytoplasm. The enzyme catalyses a fatty acyl-[ACP] + phosphate = an acyl phosphate + holo-[ACP]. Its pathway is lipid metabolism; phospholipid metabolism. Catalyzes the reversible formation of acyl-phosphate (acyl-PO(4)) from acyl-[acyl-carrier-protein] (acyl-ACP). This enzyme utilizes acyl-ACP as fatty acyl donor, but not acyl-CoA. In Acholeplasma laidlawii (strain PG-8A), this protein is Phosphate acyltransferase.